Reading from the N-terminus, the 420-residue chain is MSTSLGSNTYNRQNWEDADFPILCQTCLGENPYIRMTKEKYGKECKICARPFTVFRWCPGVRMRFKKTEVCQTCSKLKNVCQTCLLDLEYGLPIQVRDAGLSLKDEMPKSDVNKEYYTQNMEREIANSDGTRPVGALGKATSTSDMLLKLARTTPYYKRNRPHICSFWVKGECKRGEECPYRHEKPTDPDDPLADQDIKDRYYGINDPVADKLLKRASTMPRLDPPDDKTITTLYVGGLGDTITESDLRNHFYQFGEIRTITVVQRQQCAFIQFATRQAAEVAAEKSFNKLIVNGRRLNVKWGRSQAARGKEKDKEGTTESGIKLEPVPGLPGALPPPPAAEEEASANYFNLPPSGPPAVVNIALPPPPGIAPPPPPGFGPHMFHAMGPPPPFMRAPGPIHYPSQDPQRMGAHAGKHSSP.

Residues R159–P186 form a C3H1-type zinc finger. In terms of domain architecture, RRM spans T232–S305. Disordered stretches follow at residues G303–E343 and A372–P420. Basic and acidic residues predominate over residues R309–T318.

It belongs to the SLT11 family. In terms of assembly, component of the pre-catalytic and catalytic spliceosome complexes. Component of the postcatalytic spliceosome P complex.

Its subcellular location is the nucleus. It is found in the cytoplasm. Its function is as follows. Required for pre-mRNA splicing as component of the activated spliceosome. Involved in the first step of pre-mRNA splicing. Binds directly to the internal stem-loop (ISL) domain of the U6 snRNA and to the pre-mRNA intron near the 5' splice site during the activation and catalytic phases of the spliceosome cycle. The polypeptide is Pre-mRNA-splicing factor RBM22 (RBM22) (Gallus gallus (Chicken)).